Here is a 451-residue protein sequence, read N- to C-terminus: Phenylalanine--tRNA ligase, mitochondrial (451 aa).

Substrate is bound by residues 157-160 (SAHQ), R179, 186-188 (QHY), and 193-195 (QLE). K202 carries the post-translational modification N6-acetyllysine. Substrate-binding residues include E287 and F312. An FDX-ACB domain is found at 358–450 (SKYPAVINDI…AVQLLGVEGR (93 aa)).

It belongs to the class-II aminoacyl-tRNA synthetase family. In terms of assembly, monomer.

The protein localises to the mitochondrion matrix. It localises to the mitochondrion. The enzyme catalyses tRNA(Phe) + L-phenylalanine + ATP = L-phenylalanyl-tRNA(Phe) + AMP + diphosphate + H(+). Its function is as follows. Is responsible for the charging of tRNA(Phe) with phenylalanine in mitochondrial translation. To a lesser extent, also catalyzes direct attachment of m-Tyr (an oxidized version of Phe) to tRNA(Phe), thereby opening the way for delivery of the misacylated tRNA to the ribosome and incorporation of ROS-damaged amino acid into proteins. This is Phenylalanine--tRNA ligase, mitochondrial (FARS2) from Homo sapiens (Human).